The chain runs to 120 residues: Aspartate 1-decarboxylase (120 aa).

The active-site Schiff-base intermediate with substrate; via pyruvic acid is the Ser-25. At Ser-25 the chain carries Pyruvic acid (Ser). Thr-57 contacts substrate. The active-site Proton donor is Tyr-58. 73 to 75 (GAA) contacts substrate.

This sequence belongs to the PanD family. In terms of assembly, heterooctamer of four alpha and four beta subunits. The cofactor is pyruvate. Post-translationally, is synthesized initially as an inactive proenzyme, which is activated by self-cleavage at a specific serine bond to produce a beta-subunit with a hydroxyl group at its C-terminus and an alpha-subunit with a pyruvoyl group at its N-terminus.

The protein localises to the cytoplasm. The catalysed reaction is L-aspartate + H(+) = beta-alanine + CO2. Its pathway is cofactor biosynthesis; (R)-pantothenate biosynthesis; beta-alanine from L-aspartate: step 1/1. Catalyzes the pyruvoyl-dependent decarboxylation of aspartate to produce beta-alanine. This chain is Aspartate 1-decarboxylase, found in Ralstonia pickettii (strain 12J).